Consider the following 270-residue polypeptide: tRNA pseudouridine synthase A (270 aa).

Aspartate 60 (nucleophile) is an active-site residue. The interval 107-111 (FHARF) is RNA binding. Tyrosine 118 serves as a coordination point for substrate. Positions 168–172 (QCQSR) are interaction with tRNA.

This sequence belongs to the tRNA pseudouridine synthase TruA family. In terms of assembly, homodimer.

It carries out the reaction uridine(38/39/40) in tRNA = pseudouridine(38/39/40) in tRNA. Functionally, formation of pseudouridine at positions 38, 39 and 40 in the anticodon stem and loop of transfer RNAs. The chain is tRNA pseudouridine synthase A from Enterobacter sp. (strain 638).